The sequence spans 127 residues: F420-non-reducing hydrogenase subunit G (127 aa).

This sequence belongs to the [NiFe]/[NiFeSe] hydrogenase small subunit family. In terms of assembly, the F420-non-reducing hydrogenase is composed of three subunits; MvhA, MvhD and MvhG. It forms a complex with the heterodisulfide reductase (hdr).

Part of a complex that provides reducing equivalents for heterodisulfide reductase. This Methanothermus fervidus protein is F420-non-reducing hydrogenase subunit G (mvhG).